Here is a 161-residue protein sequence, read N- to C-terminus: NADH-quinone oxidoreductase subunit I (161 aa).

4Fe-4S ferredoxin-type domains are found at residues 53 to 82 and 92 to 121; these read RRYPSGEERCIACKLCEAICPAQAITIEAE and TRYDIDMVKCIYCGFCQEACPVDAIVEGPN. [4Fe-4S] cluster-binding residues include Cys62, Cys65, Cys68, Cys72, Cys101, Cys104, Cys107, and Cys111.

Belongs to the complex I 23 kDa subunit family. NDH-1 is composed of 14 different subunits. Subunits NuoA, H, J, K, L, M, N constitute the membrane sector of the complex. [4Fe-4S] cluster serves as cofactor.

The protein resides in the cell inner membrane. It carries out the reaction a quinone + NADH + 5 H(+)(in) = a quinol + NAD(+) + 4 H(+)(out). NDH-1 shuttles electrons from NADH, via FMN and iron-sulfur (Fe-S) centers, to quinones in the respiratory chain. The immediate electron acceptor for the enzyme in this species is believed to be ubiquinone. Couples the redox reaction to proton translocation (for every two electrons transferred, four hydrogen ions are translocated across the cytoplasmic membrane), and thus conserves the redox energy in a proton gradient. In Hyphomonas neptunium (strain ATCC 15444), this protein is NADH-quinone oxidoreductase subunit I.